We begin with the raw amino-acid sequence, 921 residues long: Probable TonB-dependent receptor NMB1497 (921 aa).

Positions 1-25 (MRSSFRLKPICFYLMGVTLYHYSYA) are cleaved as a signal peptide. The 122-residue stretch at 53–174 (DKKVFTDARA…LAGSANLRTL (122 aa)) folds into the TBDR plug domain. In terms of domain architecture, TBDR beta-barrel spans 185 to 921 (TYGLLLKGLT…TFLMTMSYKF (737 aa)). A TonB C-terminal box motif is present at residues 904–921 (LTNFARGRTFLMTMSYKF).

It belongs to the TonB-dependent receptor family.

It is found in the cell outer membrane. In terms of biological role, probable receptor, TonB-dependent. The sequence is that of Probable TonB-dependent receptor NMB1497 from Neisseria meningitidis serogroup B (strain ATCC BAA-335 / MC58).